The primary structure comprises 1313 residues: Histone-lysine N-methyltransferase, H3 lysine-4 specific (1313 aa).

Disordered regions lie at residues M1–R205, K400–H458, G555–L607, I667–D792, E842–Q908, and A932–L982. Residues A7–R18 are compositionally biased toward low complexity. Over residues A19–R31 the composition is skewed to basic and acidic residues. The segment covering H70–A80 has biased composition (polar residues). Over residues S105–T121 the composition is skewed to low complexity. Composition is skewed to polar residues over residues S130–L158 and N174–D186. The span at G194–S204 shows a compositional bias: basic and acidic residues. Over residues R559 to L607 the composition is skewed to basic and acidic residues. Positions R702 to H716 are enriched in basic residues. The segment covering M758–T784 has biased composition (basic and acidic residues). A compositionally biased stretch (polar residues) spans L843–P855. A compositionally biased stretch (basic and acidic residues) spans A868–R884. Residues P895–K907 show a composition bias toward basic residues. The segment covering L960–L978 has biased composition (basic and acidic residues). Positions R1137–R1142 match the RxxxRR motif motif. Residues K1171–K1288 enclose the SET domain. S-adenosyl-L-methionine is bound at residue Y1287. In terms of domain architecture, Post-SET spans D1297–N1313.

This sequence belongs to the class V-like SAM-binding methyltransferase superfamily. Component of the Set1C/COMPASS complex.

It is found in the nucleus. The protein resides in the chromosome. It catalyses the reaction L-lysyl(4)-[histone H3] + 3 S-adenosyl-L-methionine = N(6),N(6),N(6)-trimethyl-L-lysyl(4)-[histone H3] + 3 S-adenosyl-L-homocysteine + 3 H(+). The enzyme catalyses N(6)-methyl-L-lysyl(4)-[histone H3] + S-adenosyl-L-methionine = N(6),N(6)-dimethyl-L-lysyl(4)-[histone H3] + S-adenosyl-L-homocysteine + H(+). The catalysed reaction is N(6),N(6)-dimethyl-L-lysyl(4)-[histone H3] + S-adenosyl-L-methionine = N(6),N(6),N(6)-trimethyl-L-lysyl(4)-[histone H3] + S-adenosyl-L-homocysteine + H(+). Catalytic component of the COMPASS (Set1C) complex that specifically mono-, di- and trimethylates histone H3 to form H3K4me1/2/3. Binds RNAs which might negatively affect its histone methyltransferase activity. COMPASS recognizes ubiquitinated H2B on one face of the nucleosome which stimulates the methylation of H3 on the opposing face. In Neurospora crassa (strain ATCC 24698 / 74-OR23-1A / CBS 708.71 / DSM 1257 / FGSC 987), this protein is Histone-lysine N-methyltransferase, H3 lysine-4 specific (set-1).